Consider the following 136-residue polypeptide: Ribonuclease VapC47 (136 aa).

A PINc domain is found at Ile-2 to Ile-104. The Mg(2+) site is built by Asp-5 and Asp-94.

It belongs to the PINc/VapC protein family. Requires Mg(2+) as cofactor.

In terms of biological role, toxic component of a type II toxin-antitoxin (TA) system. An RNase. Its toxic effect on colony formation is neutralized by coexpression with cognate antitoxin VapB47. The chain is Ribonuclease VapC47 from Mycobacterium tuberculosis (strain CDC 1551 / Oshkosh).